The primary structure comprises 103 residues: Small ribosomal subunit protein uS10 (103 aa).

Belongs to the universal ribosomal protein uS10 family. As to quaternary structure, part of the 30S ribosomal subunit.

Functionally, involved in the binding of tRNA to the ribosomes. The sequence is that of Small ribosomal subunit protein uS10 from Neisseria gonorrhoeae.